A 164-amino-acid polypeptide reads, in one-letter code: 2S seed storage protein 3 (164 aa).

The first 21 residues, 1 to 21 (MANKLFLVCATLALCFLLTNA), serve as a signal peptide directing secretion. Propeptides lie at residues 22–37 (SIYR…DASN) and 73–81 (GPSLDDEFD).

Belongs to the 2S seed storage albumins family. The mature protein consists of a small and a large chain linked by disulfide bonds. Interacts with AHK2.

This is a 2S seed storage protein. This chain is 2S seed storage protein 3 (AT2S3), found in Arabidopsis thaliana (Mouse-ear cress).